A 268-amino-acid chain; its full sequence is 4-hydroxy-tetrahydrodipicolinate reductase (268 aa).

8-13 is an NAD(+) binding site; that stretch reads GAAGRM. R36 is a binding site for NADP(+). NAD(+) is bound by residues 99 to 101 and 123 to 126; these read GTT and AANF. H156 functions as the Proton donor/acceptor in the catalytic mechanism. H157 is a binding site for (S)-2,3,4,5-tetrahydrodipicolinate. Catalysis depends on K160, which acts as the Proton donor. 166–167 serves as a coordination point for (S)-2,3,4,5-tetrahydrodipicolinate; it reads GT.

It belongs to the DapB family.

The protein localises to the cytoplasm. The catalysed reaction is (S)-2,3,4,5-tetrahydrodipicolinate + NAD(+) + H2O = (2S,4S)-4-hydroxy-2,3,4,5-tetrahydrodipicolinate + NADH + H(+). It catalyses the reaction (S)-2,3,4,5-tetrahydrodipicolinate + NADP(+) + H2O = (2S,4S)-4-hydroxy-2,3,4,5-tetrahydrodipicolinate + NADPH + H(+). Its pathway is amino-acid biosynthesis; L-lysine biosynthesis via DAP pathway; (S)-tetrahydrodipicolinate from L-aspartate: step 4/4. Catalyzes the conversion of 4-hydroxy-tetrahydrodipicolinate (HTPA) to tetrahydrodipicolinate. This Pseudomonas fluorescens (strain Pf0-1) protein is 4-hydroxy-tetrahydrodipicolinate reductase.